Consider the following 71-residue polypeptide: Gas vesicle protein A (71 aa).

The tract at residues 12–22 (LAEVIDRILDK) is alpha helix 1. Positions 23-32 (GIVIDAWVRV) are beta-strand 1. Positions 33–36 (SLVG) are beta turn. The segment at 37 to 46 (IELLAIEARI) is beta-strand 2. Residues 47–70 (VIASVETYLKYAEAVGLTQSAAVP) are alpha helix 2.

The protein belongs to the gas vesicle GvpA family. As to quaternary structure, the gas vesicle shell is 2 nm thick and consists of a single layer of this protein. It forms helical ribs nearly perpendicular to the long axis of the vesicle.

Its subcellular location is the gas vesicle shell. Its function is as follows. Gas vesicles (GV) are hollow, gas filled proteinaceous nanostructures found in some microorganisms. During planktonic growth they allow positioning of the organism at a favorable depth for light or nutrient acquisition. GVs are highly permeable to gas. GvpA forms the protein shell. The ratio of GvpA:GvpC is estimated to be 33:1 and more recently 25:1. The sequence is that of Gas vesicle protein A from Dolichospermum flosaquae (Anabaena flos-aquae).